The chain runs to 231 residues: NADH-ubiquinone oxidoreductase chain 4 (231 aa).

7 consecutive transmembrane segments (helical) span residues 1–21 (PIAGSMVLAAILLKLGGYGII), 34–54 (MFLPFIVLALWGAILANLTCL), 63–85 (IAYSSVSHMGLVAAAIIIQTPWG), 89–111 (AMALMIAHGFTSSALFCLANTTY), 128–148 (ILPMTSTWWLLANLMNIATPP), 169–189 (TIILLGLSMLITASYSLHMFL), and 211–231 (LLMTLHLIPLMMISMKPELVI).

It belongs to the complex I subunit 4 family.

It is found in the mitochondrion membrane. It catalyses the reaction a ubiquinone + NADH + 5 H(+)(in) = a ubiquinol + NAD(+) + 4 H(+)(out). Its function is as follows. Core subunit of the mitochondrial membrane respiratory chain NADH dehydrogenase (Complex I) that is believed to belong to the minimal assembly required for catalysis. Complex I functions in the transfer of electrons from NADH to the respiratory chain. The immediate electron acceptor for the enzyme is believed to be ubiquinone. The sequence is that of NADH-ubiquinone oxidoreductase chain 4 (MT-ND4) from Porthidium ophryomegas (Slender hognose viper).